Reading from the N-terminus, the 272-residue chain is Ribosomal RNA small subunit methyltransferase A (272 aa).

N18, L20, G45, E66, D91, and N113 together coordinate S-adenosyl-L-methionine.

The protein belongs to the class I-like SAM-binding methyltransferase superfamily. rRNA adenine N(6)-methyltransferase family. RsmA subfamily.

The protein resides in the cytoplasm. It carries out the reaction adenosine(1518)/adenosine(1519) in 16S rRNA + 4 S-adenosyl-L-methionine = N(6)-dimethyladenosine(1518)/N(6)-dimethyladenosine(1519) in 16S rRNA + 4 S-adenosyl-L-homocysteine + 4 H(+). Its function is as follows. Specifically dimethylates two adjacent adenosines (A1518 and A1519) in the loop of a conserved hairpin near the 3'-end of 16S rRNA in the 30S particle. May play a critical role in biogenesis of 30S subunits. This is Ribosomal RNA small subunit methyltransferase A from Pectobacterium atrosepticum (strain SCRI 1043 / ATCC BAA-672) (Erwinia carotovora subsp. atroseptica).